A 48-amino-acid chain; its full sequence is Large ribosomal subunit protein bL33B (48 aa).

This sequence belongs to the bacterial ribosomal protein bL33 family.

This chain is Large ribosomal subunit protein bL33B (rpmG2), found in Mycoplasma genitalium (strain ATCC 33530 / DSM 19775 / NCTC 10195 / G37) (Mycoplasmoides genitalium).